A 1062-amino-acid polypeptide reads, in one-letter code: Roc-COR-CHAT protease (1062 aa).

8 LRR repeats span residues 70-94 (LAGL…HLQQ), 95-116 (LRLL…GSMP), 115-141 (MPLL…ALQK), 142-159 (LDVS…SACP), 160-180 (ALWW…MPAG), 181-203 (FKAL…NGKL), 204-226 (PKLV…LLLP), and 228-249 (GLET…IRGS). In terms of domain architecture, COR spans 470 to 660 (DWLGVMEELQ…GLMWKDNVVF (191 aa)). Positions 836 to 856 (ERDNDHTGLSDSSDQEDETFT) are disordered. Catalysis depends on residues His-931 and Cys-980.

Its function is as follows. A dedicated protease for substrate gasdermin bGSDM; cleaves the bGSDM precursor, releasing the pore-forming moiety, which integrates into the membrane and triggers cell death. Probably involved in defense against bacteriophages. Expression of bGSDM and this neighboring protease is highly toxic in E.coli. This is Roc-COR-CHAT protease from Unknown prokaryotic organism.